Consider the following 284-residue polypeptide: Diaminopimelate epimerase (284 aa).

Residues Asn14 and Asn67 each coordinate substrate. The active-site Proton donor is Cys76. Residues 77–78 (GN), Asn166, Asn199, and 217–218 (ER) each bind substrate. Cys226 acts as the Proton acceptor in catalysis. 227 to 228 (GT) contributes to the substrate binding site.

It belongs to the diaminopimelate epimerase family. As to quaternary structure, homodimer.

The protein localises to the cytoplasm. The enzyme catalyses (2S,6S)-2,6-diaminopimelate = meso-2,6-diaminopimelate. It functions in the pathway amino-acid biosynthesis; L-lysine biosynthesis via DAP pathway; DL-2,6-diaminopimelate from LL-2,6-diaminopimelate: step 1/1. Its function is as follows. Catalyzes the stereoinversion of LL-2,6-diaminopimelate (L,L-DAP) to meso-diaminopimelate (meso-DAP), a precursor of L-lysine and an essential component of the bacterial peptidoglycan. The sequence is that of Diaminopimelate epimerase from Bacillus subtilis (strain 168).